Here is a 2281-residue protein sequence, read N- to C-terminus: Retinal-specific phospholipid-transporting ATPase ABCA4 (2281 aa).

The Cytoplasmic segment spans residues 1 to 24 (MGFARQIKLLLWKNWTLRKRQKIR). Residues 25 to 45 (FVVELVWPLSLFLVLIWLRNV) form a helical membrane-spanning segment. Residues 46–646 (NPLYSKHECH…MPYPCFVDDS (601 aa)) lie on the Extracellular side of the membrane. Intrachain disulfides connect Cys54-Cys81 and Cys75-Cys324. N-linked (GlcNAc...) asparagine glycosylation occurs at Asn98. Mg(2+) contacts are provided by Ser336 and Asn338. A disulfide bridge connects residues Cys370 and Cys519. Residues Asn415 and Asn504 are each glycosylated (N-linked (Hex...) asparagine). An N-all-trans-retinylidenephosphatidylethanolamine contacts are provided by Arg587 and Arg653. 3 disulfides stabilise this stretch: Cys641–Cys1488, Cys1442–Cys1453, and Cys1486–Cys1500. Residues 647–667 (FMIILNRCFPIFMVLAWIYSV) form a helical membrane-spanning segment. Residues 668–699 (SMTVKSIVLEKELRLKETLKNQGVSNRVIWCT) lie on the Cytoplasmic side of the membrane. Residues 700–720 (WFLDSFSIMSMSICLLTIFIM) traverse the membrane as a helical segment. Residues 721–730 (HGRILHYSNP) lie on the Extracellular side of the membrane. A helical membrane pass occupies residues 731–751 (FILFLFLLAFSIATIMQCFLL). Topologically, residues 752 to 759 (STFFSRAS) are cytoplasmic. Residues 760–780 (LAAACSGVIYFTLYLPHILCF) traverse the membrane as a helical segment. At 781-835 (AWQDRITADMKMAVSLLSPVAFGFGTEYLARFEEQGVGLQWSNIGNSPMEGDEFS) the chain is on the extracellular side. The helical transmembrane segment at 836-856 (FLMSMKMMLLDAALYGLLAWY) threads the bilayer. At 857–1374 (LDQVFPGDYG…IRSHKDFLAQ (518 aa)) the chain is on the cytoplasmic side. Residue Thr901 is modified to Phosphothreonine. In terms of domain architecture, ABC transporter 1 spans 929–1160 (VCVKNLVKIF…FGTGFYLTLV (232 aa)). 3 residues coordinate ATP: Phe938, Gly966, and Lys969. Thr970 contributes to the Mg(2+) binding site. The ATP site is built by Thr971, Gln1010, Lys1054, Gly1064, Gly1065, and His1118. Ser1185 carries the phosphoserine modification. Positions 1295 to 1340 (ENINLRHPCSGPSEKAGQTPQGSSSHPREPAAHPEGQPPPEREGHS) are disordered. The segment covering 1310–1319 (AGQTPQGSSS) has biased composition (polar residues). Phosphothreonine is present on Thr1313. A phosphoserine mark is found at Ser1317 and Ser1319. Residues 1375–1395 (IVLPATFVFLALMLSLIIPPF) traverse the membrane as a helical segment. Residues 1396-1679 (GEYPALTLHP…TVLTTSVDAV (284 aa)) lie on the Extracellular side of the membrane. Asn1455 carries an N-linked (Hex...) asparagine glycan. Residue Asn1527 is glycosylated (N-linked (Hex...) asparagine). Asn1586 is a glycosylation site (N-linked (GlcNAc...) asparagine). A glycan (N-linked (Hex...) asparagine) is linked at Asn1660. Residues 1680–1700 (VAICVIFAMSFVPASFVLYLI) traverse the membrane as a helical segment. Residues 1701-1725 (QERVNKAKHLQFVSGVSPTTYWLTN) lie on the Cytoplasmic side of the membrane. A helical membrane pass occupies residues 1726 to 1746 (FLWDIMNYTVSAALVVGIFIG). Topologically, residues 1747–1757 (FQKKAYTSSEN) are extracellular. Residues 1758-1778 (LPALVALLMLYGWAVIPMMYP) traverse the membrane as a helical segment. The Cytoplasmic segment spans residues 1779-1790 (ASFLFDIPSTAY). A helical membrane pass occupies residues 1791 to 1811 (VALSCANLFIGINSSAITFVL). The Extracellular portion of the chain corresponds to 1812–1829 (ELFENNRTLLRINAMLRK). Residue Asn1817 is glycosylated (N-linked (GlcNAc...) asparagine). A helical transmembrane segment spans residues 1830 to 1850 (LLIIFPHFCLGRGLIDLALSQ). The Cytoplasmic segment spans residues 1851-1879 (AVTDVYARFGEEHSSNPFQWDLIGKNLAA). The helical transmembrane segment at 1880 to 1900 (MAVEGVVYFLLTLLIQYQFFF) threads the bilayer. The Extracellular portion of the chain corresponds to 1901–2281 (SRWTTEPAKE…VDKGNSAPQG (381 aa)). An N-linked (GlcNAc...) asparagine glycan is attached at Asn1931. The ABC transporter 2 domain occupies 1936 to 2168 (LRLNELTKVY…FGDGYIVTMK (233 aa)). ATP contacts are provided by Asn1972, Gly1973, Lys1976, Thr1977, and Thr1978. Thr1977 provides a ligand contact to Mg(2+). N-linked (GlcNAc...) asparagine glycans are attached at residues Asn2004 and Asn2050. Gly2071 is a binding site for ATP. An essential for ATP binding and ATPase activity region spans residues 2242 to 2247 (VFVNFA). Asn2251 carries N-linked (GlcNAc...) asparagine glycosylation. A disordered region spans residues 2262-2281 (AAGASRQAKEVDKGNSAPQG).

Post-translationally, N-glycosylated. In terms of processing, proteolytic cleavage by trypsin leads to a 120-kDa N-terminal fragment and a 115-kDa C-terminal fragment that are linked through disulfide bonds. Phosphorylation is independent of light exposure and modulates ATPase activity. In terms of tissue distribution, expressed in retina namely in the periphery and incisures of the rod outer segments (ROS).

It is found in the membrane. Its subcellular location is the cell projection. It localises to the cilium. The protein localises to the photoreceptor outer segment. The protein resides in the cytoplasmic vesicle. It is found in the endoplasmic reticulum. It carries out the reaction ATP + H2O + phospholipidSide 1 = ADP + phosphate + phospholipidSide 2.. The catalysed reaction is an N-all-trans-retinylidenephosphatidylethanolamine(out) + ATP + H2O = an N-all-trans-retinylidenephosphatidylethanolamine(in) + ADP + phosphate + H(+). The enzyme catalyses a 1,2-diacyl-sn-glycero-3-phosphoethanolamine(out) + ATP + H2O = a 1,2-diacyl-sn-glycero-3-phosphoethanolamine(in) + ADP + phosphate + H(+). It catalyses the reaction N-11-cis-retinylidenephosphatidylethanolamine(out) + ATP + H2O = N-11-cis-retinylidenephosphatidylethanolamine(in) + ADP + phosphate + H(+). It carries out the reaction ATP + H2O = ADP + phosphate + H(+). Its activity is regulated as follows. All-trans-retinal transport activity is reduced by EDTA chelation of Mg2+. All-trans-retinal transport activity is inhibited by N-ethylmaleimide (NEM). Phosphatidylethanolamine transport is strongly inhibited by beryllium fluoride and NEM. In terms of biological role, flippase that catalyzes in an ATP-dependent manner the transport of retinal-phosphatidylethanolamine conjugates like the 11-cis and all-trans isomers of N-retinylidene-phosphatidylethanolamine from the lumen to the cytoplasmic leaflet of photoreceptor outer segment disk membranes, where N-cis-retinylidene-phosphatidylethanolamine (N-cis-R-PE) is then isomerized to its all-trans isomer (N-trans-R-PE) and reduced by RDH8 to produce all-trans-retinol (all-trans-rol) and therefore prevents the accumulation of excess of 11-cis-retinal and its schiff-base conjugate and the formation of toxic bisretinoid. Displays both ATPase and GTPase activity that is strongly influenced by the lipid environment and the presence of retinoid compounds. Binds the unprotonated form of N-retinylidene-phosphatidylethanolamine with high affinity in the absence of ATP and ATP binding and hydrolysis induce a protein conformational change that causes the dissociation of N-retinylidene-phosphatidylethanolamine. In Bos taurus (Bovine), this protein is Retinal-specific phospholipid-transporting ATPase ABCA4.